The following is a 22-amino-acid chain: Bacteriocin serracin-P 23 kDa subunit (22 aa).

Its function is as follows. Major component of a prophage tail tube. Functionally, antibacterial activity against Gram-negative bacterium E.amylovora. The chain is Bacteriocin serracin-P 23 kDa subunit from Serratia plymuthica.